Reading from the N-terminus, the 91-residue chain is MAKQATMKNAALKQLTKDADEILHLIKVQLDNLTLPSCPLYEEVLDTQMFGLQKEVDFAVKLGLVDREDGKQIMLRLEKELSKLHEAFTLV.

Belongs to the UPF0358 family.

This Staphylococcus aureus (strain MSSA476) protein is UPF0358 protein SAS1047.